The chain runs to 261 residues: Chloroplastic import inner membrane translocase subunit HP30-1 (261 aa).

4 helical membrane passes run 59–77 (AAVV…GGLM), 113–129 (NFAA…SVMK), 139–155 (SAVV…SLVS), and 163–180 (MNAI…GVFF).

The protein belongs to the Tim17/Tim22/Tim23 family. As to quaternary structure, probable component of a protein-conducting channel made of HP30-1, HP30-2 and HP20 that mediates the import of transit sequence-less proteins into the chloroplastic inner membrane. Interacts with CEQORH.

The protein localises to the plastid. Its subcellular location is the chloroplast inner membrane. Functionally, together with HP30-2 and HP20, triggers the import and insertion of transit sequence-less multi-pass transmembrane proteins (e.g. CEQORH) into the chloroplastic inner membrane. The sequence is that of Chloroplastic import inner membrane translocase subunit HP30-1 from Arabidopsis thaliana (Mouse-ear cress).